The chain runs to 726 residues: MEDRLHMDNGLVPQKIVSVHLQDSTLKEVKDQVSNKQAQILEPKPEPSLEIKPEQDGMEHVGRDDPKALGEEPKQRRGSASGSEPAGDSDRGGGPVEHYHLHLSSCHECLELENSTIESVKFASAENIPDLPYDYSSSLESVADETSPEREGRRVNLTGKAPNILLYVGSDSQEALGRFHEVRSVLADCVDIDSYILYHLLEDSALRDPWTDNCLLLVIATRESIPEDLYQKFMAYLSQGGKVLGLSSSFTFGGFQVTSKGALHKTVQNLVFSKADQSEVKLSVLSSGCRYQEGPVRLSPGRLQGHLENEDKDRMIVHVPFGTRGGEAVLCQVHLELPPSSNIVQTPEDFNLLKSSNFRRYEVLREILTTLGLSCDMKQVPALTPLYLLSAAEEIRDPLMQWLGKHVDSEGEIKSGQLSLRFVSSYVSEVEITPSCIPVVTNMEAFSSEHFNLEIYRQNLQTKQLGKVILFAEVTPTTMRLLDGLMFQTPQEMGLIVIAARQTEGKGRGGNVWLSPVGCALSTLLISIPLRSQLGQRIPFVQHLMSVAVVEAVRSIPEYQDINLRVKWPNDIYYSDLMKIGGVLVNSTLMGETFYILIGCGFNVTNSNPTICINDLITEYNKQHKAELKPLRADYLIARVVTVLEKLIKEFQDKGPNSVLPLYYRYWVHSGQQVHLGSAEGPKVSIVGLDDSGFLQVHQEGGEVVTVHPDGNSFDMLRNLILPKRR.

A disordered region spans residues 28–98 (EVKDQVSNKQ…SDRGGGPVEH (71 aa)). Over residues 43–75 (PKPEPSLEIKPEQDGMEHVGRDDPKALGEEPKQ) the composition is skewed to basic and acidic residues. A phosphoserine mark is found at serine 147 and serine 299. The BPL/LPL catalytic domain maps to 463–652 (KQLGKVILFA…VLEKLIKEFQ (190 aa)).

This sequence belongs to the biotin--protein ligase family. Monomer. In terms of tissue distribution, widely expressed. Mostly expressed in muscle, placenta and to a lower extent in the brain, kidney, pancreas, liver and lung.

The protein resides in the cytoplasm. The protein localises to the mitochondrion. It carries out the reaction apo-[methylmalonyl-CoA:pyruvate carboxytransferase] + biotin + ATP = holo-[methylmalonyl-CoA:pyruvate carboxytransferase] + AMP + diphosphate + H(+). The enzyme catalyses apo-[propionyl-CoA:carbon-dioxide ligase (ADP-forming)] + biotin + ATP = holo-[propionyl-CoA:carbon-dioxide ligase (ADP-forming)] + AMP + diphosphate + H(+). The catalysed reaction is apo-[3-methylcrotonoyl-CoA:carbon-dioxide ligase (ADP-forming)] + biotin + ATP = holo-[3-methylcrotonoyl-CoA:carbon-dioxide ligase (ADP-forming)] + AMP + diphosphate + H(+). It catalyses the reaction biotin + L-lysyl-[protein] + ATP = N(6)-biotinyl-L-lysyl-[protein] + AMP + diphosphate + H(+). Biotin--protein ligase catalyzing the biotinylation of the 4 biotin-dependent carboxylases acetyl-CoA-carboxylase, pyruvate carboxylase, propionyl-CoA carboxylase, and methylcrotonyl-CoA carboxylase. The protein is Biotin--protein ligase of Homo sapiens (Human).